We begin with the raw amino-acid sequence, 290 residues long: MITVRTIPELRAAIAAHPGTGRPGKGRPAFVPTMGNLHDGHIALVRQARPLGDVLVASIFVNRLQFLPYEDFDSYPRTWEADCAKLEAAGCDIVFAPRESDLYPEPQTFKLQPDPQLADILEGHFRPGFFTGVCTVVMKLFSAVFFASGGGTAVFGKKDYQQLMVIRRMVQQFALPVEVVAGETARADDGLALSSRNGYLSTAERAQAVQLSAALRALAQAAQAPGAPPLAALEQQALQTLAQQGWAPDYLTVRQRHDLQPPAAGAAAGTLVALGAARLGSTRLIDNLEF.

34-41 (MGNLHDGH) contributes to the ATP binding site. Histidine 41 functions as the Proton donor in the catalytic mechanism. Glutamine 65 provides a ligand contact to (R)-pantoate. Position 65 (glutamine 65) interacts with beta-alanine. ATP is bound at residue 156 to 159 (GKKD). Glutamine 162 contributes to the (R)-pantoate binding site. ATP contacts are provided by residues alanine 185 and 193–196 (LSSR).

This sequence belongs to the pantothenate synthetase family. As to quaternary structure, homodimer.

It is found in the cytoplasm. It catalyses the reaction (R)-pantoate + beta-alanine + ATP = (R)-pantothenate + AMP + diphosphate + H(+). It participates in cofactor biosynthesis; (R)-pantothenate biosynthesis; (R)-pantothenate from (R)-pantoate and beta-alanine: step 1/1. Catalyzes the condensation of pantoate with beta-alanine in an ATP-dependent reaction via a pantoyl-adenylate intermediate. This Acidovorax ebreus (strain TPSY) (Diaphorobacter sp. (strain TPSY)) protein is Pantothenate synthetase.